The following is a 246-amino-acid chain: Phosphatidylserine decarboxylase proenzyme (246 aa).

S204 serves as the catalytic Schiff-base intermediate with substrate; via pyruvic acid. Residue S204 is modified to Pyruvic acid (Ser); by autocatalysis.

The protein belongs to the phosphatidylserine decarboxylase family. PSD-A subfamily. As to quaternary structure, heterodimer of a large membrane-associated beta subunit and a small pyruvoyl-containing alpha subunit. It depends on pyruvate as a cofactor. Post-translationally, is synthesized initially as an inactive proenzyme. Formation of the active enzyme involves a self-maturation process in which the active site pyruvoyl group is generated from an internal serine residue via an autocatalytic post-translational modification. Two non-identical subunits are generated from the proenzyme in this reaction, and the pyruvate is formed at the N-terminus of the alpha chain, which is derived from the carboxyl end of the proenzyme. The post-translation cleavage follows an unusual pathway, termed non-hydrolytic serinolysis, in which the side chain hydroxyl group of the serine supplies its oxygen atom to form the C-terminus of the beta chain, while the remainder of the serine residue undergoes an oxidative deamination to produce ammonia and the pyruvoyl prosthetic group on the alpha chain.

The protein resides in the cell membrane. It carries out the reaction a 1,2-diacyl-sn-glycero-3-phospho-L-serine + H(+) = a 1,2-diacyl-sn-glycero-3-phosphoethanolamine + CO2. Its pathway is phospholipid metabolism; phosphatidylethanolamine biosynthesis; phosphatidylethanolamine from CDP-diacylglycerol: step 2/2. Functionally, catalyzes the formation of phosphatidylethanolamine (PtdEtn) from phosphatidylserine (PtdSer). This is Phosphatidylserine decarboxylase proenzyme from Zymomonas mobilis subsp. mobilis (strain ATCC 31821 / ZM4 / CP4).